Here is a 229-residue protein sequence, read N- to C-terminus: Protein-L-isoaspartate O-methyltransferase (229 aa).

The active site involves serine 74.

Belongs to the methyltransferase superfamily. L-isoaspartyl/D-aspartyl protein methyltransferase family.

It localises to the cytoplasm. It catalyses the reaction [protein]-L-isoaspartate + S-adenosyl-L-methionine = [protein]-L-isoaspartate alpha-methyl ester + S-adenosyl-L-homocysteine. Its function is as follows. Catalyzes the methyl esterification of L-isoaspartyl residues in peptides and proteins that result from spontaneous decomposition of normal L-aspartyl and L-asparaginyl residues. It plays a role in the repair and/or degradation of damaged proteins. The chain is Protein-L-isoaspartate O-methyltransferase from Pelotomaculum thermopropionicum (strain DSM 13744 / JCM 10971 / SI).